A 438-amino-acid chain; its full sequence is Aspartyl protease 25 (438 aa).

An N-terminal signal peptide occupies residues 1 to 23; that stretch reads MAATTTIPLLLLLLAATVAAAAA. The Peptidase A1 domain occupies 79–433; sequence YVVRAGLGSP…DVANSRVGFA (355 aa). D97 is an active-site residue. C107 and C113 form a disulfide bridge. N-linked (GlcNAc...) asparagine glycans are attached at residues N123, N193, and N282. The active site involves D313. A disulfide bridge links C352 with C394.

It belongs to the peptidase A1 family.

Functionally, anther-specific aspartic protease involved in tapetal programmed cell death (PCD). Directly regulated by the transcription factor EAT1/DTD in anthers during tapetum PCD and degeneration. This chain is Aspartyl protease 25, found in Oryza sativa subsp. japonica (Rice).